Consider the following 60-residue polypeptide: UPF0434 protein NMCC_0628 (60 aa).

It belongs to the UPF0434 family.

The chain is UPF0434 protein NMCC_0628 from Neisseria meningitidis serogroup C (strain 053442).